A 244-amino-acid chain; its full sequence is Leucyl/phenylalanyl-tRNA--protein transferase (244 aa).

Residues 1–22 are disordered; the sequence is MHSQPYLLSPAPNNTPFPPAEH.

It belongs to the L/F-transferase family.

The protein resides in the cytoplasm. The enzyme catalyses N-terminal L-lysyl-[protein] + L-leucyl-tRNA(Leu) = N-terminal L-leucyl-L-lysyl-[protein] + tRNA(Leu) + H(+). The catalysed reaction is N-terminal L-arginyl-[protein] + L-leucyl-tRNA(Leu) = N-terminal L-leucyl-L-arginyl-[protein] + tRNA(Leu) + H(+). It carries out the reaction L-phenylalanyl-tRNA(Phe) + an N-terminal L-alpha-aminoacyl-[protein] = an N-terminal L-phenylalanyl-L-alpha-aminoacyl-[protein] + tRNA(Phe). Its function is as follows. Functions in the N-end rule pathway of protein degradation where it conjugates Leu, Phe and, less efficiently, Met from aminoacyl-tRNAs to the N-termini of proteins containing an N-terminal arginine or lysine. This chain is Leucyl/phenylalanyl-tRNA--protein transferase, found in Xylella fastidiosa (strain M12).